The following is a 1076-amino-acid chain: Carbamoyl phosphate synthase large chain (1076 aa).

The interval 1–403 (MPKRTDIQSI…SLQKALRGLE (403 aa)) is carboxyphosphate synthetic domain. ATP contacts are provided by Arg129, Arg169, Gly175, Gly176, Glu208, Leu210, Glu215, Gly241, Ile242, His243, Gln285, and Glu299. The region spanning 133-328 (DKAMKSIGLE…IAKVAAKLAV (196 aa)) is the ATP-grasp 1 domain. Residues Gln285, Glu299, and Asn301 each coordinate Mg(2+). Gln285, Glu299, and Asn301 together coordinate Mn(2+). The tract at residues 404-553 (VGAAGLDEKV…YSTYDEECEA (150 aa)) is oligomerization domain. Positions 554–935 (NPTDKDKIMV…AYAKAELGCG (382 aa)) are carbamoyl phosphate synthetic domain. An ATP-grasp 2 domain is found at 678 to 869 (QQAVQRLGLK…LAKIAARVMV (192 aa)). Residues Arg714, Arg753, Leu755, Glu760, Gly785, Val786, His787, Ser788, Gln828, and Glu840 each contribute to the ATP site. Mg(2+) contacts are provided by Gln828, Glu840, and Asn842. Mn(2+)-binding residues include Gln828, Glu840, and Asn842. One can recognise an MGS-like domain in the interval 936 to 1076 (SVYPEGGRAL…LHARVKANQA (141 aa)). Residues 936 to 1076 (SVYPEGGRAL…LHARVKANQA (141 aa)) form an allosteric domain region.

Belongs to the CarB family. In terms of assembly, composed of two chains; the small (or glutamine) chain promotes the hydrolysis of glutamine to ammonia, which is used by the large (or ammonia) chain to synthesize carbamoyl phosphate. Tetramer of heterodimers (alpha,beta)4. Requires Mg(2+) as cofactor. The cofactor is Mn(2+).

It carries out the reaction hydrogencarbonate + L-glutamine + 2 ATP + H2O = carbamoyl phosphate + L-glutamate + 2 ADP + phosphate + 2 H(+). The catalysed reaction is hydrogencarbonate + NH4(+) + 2 ATP = carbamoyl phosphate + 2 ADP + phosphate + 2 H(+). It participates in amino-acid biosynthesis; L-arginine biosynthesis; carbamoyl phosphate from bicarbonate: step 1/1. It functions in the pathway pyrimidine metabolism; UMP biosynthesis via de novo pathway; (S)-dihydroorotate from bicarbonate: step 1/3. Large subunit of the glutamine-dependent carbamoyl phosphate synthetase (CPSase). CPSase catalyzes the formation of carbamoyl phosphate from the ammonia moiety of glutamine, carbonate, and phosphate donated by ATP, constituting the first step of 2 biosynthetic pathways, one leading to arginine and/or urea and the other to pyrimidine nucleotides. The large subunit (synthetase) binds the substrates ammonia (free or transferred from glutamine from the small subunit), hydrogencarbonate and ATP and carries out an ATP-coupled ligase reaction, activating hydrogencarbonate by forming carboxy phosphate which reacts with ammonia to form carbamoyl phosphate. This is Carbamoyl phosphate synthase large chain from Vibrio cholerae serotype O1 (strain ATCC 39315 / El Tor Inaba N16961).